The chain runs to 273 residues: Gamma-glutamyl cyclotransferase gliK (273 aa).

Residues 227-243 (WLGWIILTLYGLMWSYH) form a helical membrane-spanning segment.

Belongs to the class-I pyridoxal-phosphate-dependent aminotransferase family.

It is found in the membrane. It carries out the reaction an alpha-(gamma-L-glutamyl)-L-amino acid = 5-oxo-L-proline + an L-alpha-amino acid. It functions in the pathway mycotoxin biosynthesis. Gamma-glutamyl cyclotransferase-like protein; part of the gene cluster that mediates the biosynthesis of gliotoxin, a member of the epipolythiodioxopiperazine (ETP) class of toxins characterized by a disulfide bridged cyclic dipeptide. The first step in gliotoxin biosynthesis is the condensation of serine and phenylalanine to form the cyclo-L-phenylalanyl-L-serine diketopiperazine (DKP) by the NRPS gliP. GliP is also able to produce the DKP cyclo-L-tryptophanyl-L-serine, suggesting that the substrate specificity of the first adenylation (A) domain in gliP is sufficiently relaxed to accommodate both L-Phe and L-Trp. The cytochrome P450 monooxygenase gliC has been shown to catalyze the subsequent hydroxylation of the alpha-carbon of L-Phe in cyclo-L-phenylalanyl-L-serine whereas the second cytochrome P450 enzyme, gliF, is presumably involved in the modification of the DKP side chain. The glutathione S-transferase (GST) gliG then forms a bis-glutathionylated biosynthetic intermediate which is responsible for the sulfurization of gliotoxin. This bis-glutathionylated intermediate is subsequently processed by the gamma-glutamyl cyclotransferase gliK to remove both gamma-glutamyl moieties. Subsequent processing via gliI yields a biosynthetic intermediate, which is N-methylated via the N-methyltransferase gliN, before the gliotoxin oxidoreductase gliT-mediated disulfide bridge closure. GliN-mediated amide methylation confers stability to ETP, damping the spontaneous formation of tri- and tetrasulfides. Intracellular dithiol gliotoxin oxidized by gliT is subsequently effluxed by gliA. Gliotoxin contributes to pathogenesis during invasive aspergillosis. In macrophages and neutrophils, gliotoxin showed inhibition of various different cell functions including cytokine production, antigen presentation, phagocytosis, and production of reactive oxygen species. This chain is Gamma-glutamyl cyclotransferase gliK, found in Aspergillus fumigatus (strain ATCC MYA-4609 / CBS 101355 / FGSC A1100 / Af293) (Neosartorya fumigata).